The primary structure comprises 551 residues: Cation/acetate symporter ActP (551 aa).

Transmembrane regions (helical) follow at residues 34–54 (IEAI…TYWA), 77–97 (GLAI…SALV), 104–124 (GLIY…LIAE), 150–170 (LSAC…MVGA), 184–204 (VAVV…GMLA), 207–227 (WVQI…ALMV), 263–283 (ISAL…PHIL), 304–324 (GFIG…ILLV), 356–376 (FFLG…VAGL), 406–426 (VSKI…ILFE), 430–450 (IAFM…PIIF), 469–489 (LGLL…VTIL), and 498–518 (YEYP…FFSI).

The protein belongs to the sodium:solute symporter (SSF) (TC 2.A.21) family.

The protein localises to the cell inner membrane. Functionally, transports acetate. This chain is Cation/acetate symporter ActP, found in Yersinia enterocolitica serotype O:8 / biotype 1B (strain NCTC 13174 / 8081).